The primary structure comprises 243 residues: MELDILYRDDELIAINKPAGMLVHRSWLDKAETLFAMQTLRDQINQHVFPIHRLDRPTSGVLLFALNSEMARLMSEQFEQHKVEKEYLAIVRGYIAEKGEIDYPLKVILDKIADKFSQPKAAQQAVTFYQNLAKVEMPYSTGKYATTRYSLVALSPKTGRKHQLRRHMKHLFHPIMGDTKYGDLHQNRRLTEKTGCNRLMLHARLLHFTHPKTLQKITISALLDQQWQMLFNQFGWHFTDFFY.

The active site involves Asp-55.

It belongs to the pseudouridine synthase RluA family.

The catalysed reaction is uridine(65) in tRNA = pseudouridine(65) in tRNA. Responsible for synthesis of pseudouridine from uracil-65 in transfer RNAs. The sequence is that of tRNA pseudouridine synthase C (truC) from Haemophilus ducreyi (strain 35000HP / ATCC 700724).